We begin with the raw amino-acid sequence, 150 residues long: Protein-arginine-phosphatase (150 aa).

Residue Cys-7 is the Nucleophile of the active site. Substrate is bound at residue 8 to 13 (TGNTCR). The active site involves Arg-13. Asp-118 acts as the Proton donor/acceptor in catalysis.

It belongs to the low molecular weight phosphotyrosine protein phosphatase family.

The catalysed reaction is N(omega)-phospho-L-arginyl-[protein] + H2O = L-arginyl-[protein] + phosphate. With respect to regulation, efficiently inhibited by Cu(2+) ion, Zn(2+) ion, sodium pyrophosphate and N-ethylmaleimide, while the addition of Mg(2+), Ca(2+) or Fe(3+) ions has minimal effect. Inhibited in a competitive manner by vanadate. Catalyzes the specific dephosphorylation of phosphoarginine residues in a large number of proteins. Counteracts the protein arginine kinase McsB in vivo. Can dephosphorylate CtsR-P; thus, can restore the DNA-binding ability of the CtsR repressor by reversing the McsB-mediated phosphorylation. Is the only active pArg phosphatase present in B.subtilis. Exhibits almost no activity against pSer, pThr, or pTyr peptides. Appears to play a role in B.subtilis stress resistance. Protein arginine phosphorylation has a physiologically important role and is involved in the regulation of many critical cellular processes, such as protein homeostasis, motility, competence, and stringent and stress responses, by regulating gene expression and protein activity. The protein is Protein-arginine-phosphatase (ywlE) of Bacillus subtilis (strain 168).